A 469-amino-acid polypeptide reads, in one-letter code: Flap endonuclease 1-B (469 aa).

The N-domain stretch occupies residues methionine 1 to arginine 103. A Mg(2+)-binding site is contributed by aspartate 32. Positions 45 and 69 each coordinate DNA. Aspartate 85, glutamate 157, glutamate 159, aspartate 183, and aspartate 185 together coordinate Mg(2+). Residues aspartate 121–tyrosine 257 form an I-domain region. Residue glutamate 157 coordinates DNA. The DNA site is built by glycine 235 and aspartate 237. Aspartate 237 provides a ligand contact to Mg(2+). A disordered region spans residues glutamine 274–proline 354. Composition is skewed to acidic residues over residues glutamate 282–proline 295 and glutamate 302–alanine 317. A compositionally biased stretch (basic residues) spans proline 326–lysine 342. The tract at residues glutamine 412–phenylalanine 420 is interaction with PCNA. A disordered region spans residues proline 424–lysine 469. Positions glycine 441–glutamate 459 are enriched in basic and acidic residues.

The protein belongs to the XPG/RAD2 endonuclease family. FEN1 subfamily. Interacts with PCNA. Three molecules of FEN1 bind to one PCNA trimer with each molecule binding to one PCNA monomer. PCNA stimulates the nuclease activity without altering cleavage specificity. Mg(2+) serves as cofactor. In terms of processing, phosphorylated. Phosphorylation upon DNA damage induces relocalization to the nuclear plasma.

It is found in the nucleus. The protein localises to the nucleolus. It localises to the nucleoplasm. Its subcellular location is the mitochondrion. Functionally, structure-specific nuclease with 5'-flap endonuclease and 5'-3' exonuclease activities involved in DNA replication and repair. During DNA replication, cleaves the 5'-overhanging flap structure that is generated by displacement synthesis when DNA polymerase encounters the 5'-end of a downstream Okazaki fragment. It enters the flap from the 5'-end and then tracks to cleave the flap base, leaving a nick for ligation. Also involved in the long patch base excision repair (LP-BER) pathway, by cleaving within the apurinic/apyrimidinic (AP) site-terminated flap. Acts as a genome stabilization factor that prevents flaps from equilibrating into structures that lead to duplications and deletions. Also possesses 5'-3' exonuclease activity on nicked or gapped double-stranded DNA, and exhibits RNase H activity. Also involved in replication and repair of rDNA and in repairing mitochondrial DNA. This Laccaria bicolor (strain S238N-H82 / ATCC MYA-4686) (Bicoloured deceiver) protein is Flap endonuclease 1-B.